The sequence spans 328 residues: Tyrosine recombinase XerC (328 aa).

The Core-binding (CB) domain occupies 13–100; sequence QAPHPQIAAY…AWRGWFKWMA (88 aa). Residues 122-319 enclose the Tyr recombinase domain; that stretch reads RLPKALSVEQ…DFQHLAKIYD (198 aa). Residues Arg-162, Lys-197, His-271, Arg-274, and His-297 contribute to the active site. Tyr-306 serves as the catalytic O-(3'-phospho-DNA)-tyrosine intermediate.

The protein belongs to the 'phage' integrase family. XerC subfamily. In terms of assembly, forms a cyclic heterotetrameric complex composed of two molecules of XerC and two molecules of XerD.

The protein resides in the cytoplasm. In terms of biological role, site-specific tyrosine recombinase, which acts by catalyzing the cutting and rejoining of the recombining DNA molecules. The XerC-XerD complex is essential to convert dimers of the bacterial chromosome into monomers to permit their segregation at cell division. It also contributes to the segregational stability of plasmids. The sequence is that of Tyrosine recombinase XerC from Ralstonia pickettii (strain 12J).